The following is a 110-amino-acid chain: Phosphoribosyl-ATP pyrophosphatase (110 aa).

Belongs to the PRA-PH family.

It is found in the cytoplasm. It carries out the reaction 1-(5-phospho-beta-D-ribosyl)-ATP + H2O = 1-(5-phospho-beta-D-ribosyl)-5'-AMP + diphosphate + H(+). The protein operates within amino-acid biosynthesis; L-histidine biosynthesis; L-histidine from 5-phospho-alpha-D-ribose 1-diphosphate: step 2/9. This Pseudomonas syringae pv. syringae (strain B728a) protein is Phosphoribosyl-ATP pyrophosphatase.